The following is a 523-amino-acid chain: MQIREVILDGESLTIEQVLAVAYGQPGTPVVRLAPIARQRVERAAQAVQDLLARGVVAYGITTGFGAFKDRVIAPDQVERLQYNILVSHAVGVGPVFDIPTTRAIMLIRANTLARGHSGVRLQTVERLLDMLNQGIHPRIPCKGSLGASGDLAPLAHMALPLIGLGEVEWQGEVLPAATALERLGWQPLHLAAKEGLALTNGTAVMCALGVIETARAETLSATADIAGCLSLEALYGTPAAFDARLHALRPFPRQIECAAHLRRLLAGSTFVRNNDPRHVQDAYTLRCIPQVHGAVRDAIAYARWVFAIELNAVTDNPLLFVDDDGNVEVISGGNFHGEPLAIALDYLGLAVAELGNIAERRLMRLTDEASNTHVLPAFLTRAGGLNSGFMIVQYTAAALATENKVLAHPASVDSIPTSANVEDHVSMGVTAGLKLRSIIDNVSQILALELFAAAQGIDFRRQELGSQARLGRGTGPVYELIRQYVPFIAEDTLLHPYITIISELVAQGKIAAAAAVHDDADA.

The 5-imidazolinone (Ala-Gly) cross-link spans 148 to 150 (ASG). Ser-149 is subject to 2,3-didehydroalanine (Ser).

The protein belongs to the PAL/histidase family. Contains an active site 4-methylidene-imidazol-5-one (MIO), which is formed autocatalytically by cyclization and dehydration of residues Ala-Ser-Gly.

The protein resides in the cytoplasm. It carries out the reaction L-histidine = trans-urocanate + NH4(+). It participates in amino-acid degradation; L-histidine degradation into L-glutamate; N-formimidoyl-L-glutamate from L-histidine: step 1/3. This Chloroflexus aurantiacus (strain ATCC 29366 / DSM 635 / J-10-fl) protein is Histidine ammonia-lyase.